The chain runs to 471 residues: Glutamate--tRNA ligase (471 aa).

The 'HIGH' region signature appears at 9–19 (PSPTGYLHVGG). 4 residues coordinate Zn(2+): Cys-98, Cys-100, Cys-125, and His-127. The short motif at 237-241 (KLSKR) is the 'KMSKS' region element. Lys-240 contacts ATP.

It belongs to the class-I aminoacyl-tRNA synthetase family. Glutamate--tRNA ligase type 1 subfamily. In terms of assembly, monomer. It depends on Zn(2+) as a cofactor.

The protein resides in the cytoplasm. The catalysed reaction is tRNA(Glu) + L-glutamate + ATP = L-glutamyl-tRNA(Glu) + AMP + diphosphate. Functionally, catalyzes the attachment of glutamate to tRNA(Glu) in a two-step reaction: glutamate is first activated by ATP to form Glu-AMP and then transferred to the acceptor end of tRNA(Glu). The sequence is that of Glutamate--tRNA ligase from Shigella dysenteriae serotype 1 (strain Sd197).